The primary structure comprises 1164 residues: DNA-directed RNA polymerase 132 kDa polypeptide (1164 aa).

Belongs to the RNA polymerase beta chain family. As to quaternary structure, the DNA-dependent RNA polymerase used for intermediate and late genes expression consists of eight subunits (147) kDa, (133) kDa, (35) kDa, (30) kDa, (22) kDa, (19) kDa, (18) kDa and (7) kDa totalling more than 500 kDa in mass. The same holoenzyme, with the addition of the transcription-specificity factor RAP94, is used for early gene expression.

It localises to the virion. It catalyses the reaction RNA(n) + a ribonucleoside 5'-triphosphate = RNA(n+1) + diphosphate. In terms of biological role, part of the DNA-dependent RNA polymerase which catalyzes the transcription of viral DNA into RNA using the four ribonucleoside triphosphates as substrates. Responsible for the transcription of early, intermediate and late genes. DNA-dependent RNA polymerase associates with the early transcription factor (ETF), itself composed of D6 and A7, thereby allowing the early genes transcription. Late transcription, and probably also intermediate transcription, require newly synthesized RNA polymerase. This is DNA-directed RNA polymerase 132 kDa polypeptide (RPO132) from Camelus.